The primary structure comprises 434 residues: MAVERIHAREILDSRGNPTVEVDLYTHKGMFRAAVPSGASTGIYEALELRDNDKSRFLGKGVLQAVDHINSTVAPAIVGSGLSVVDQEKIDNLMLEMDGTENKSKFGANAILGVSLAVCKAGAAEKDVPLYRHIADLAGNSDLILPVPAFNVINGGSHAGNKLAMQEFMILPVGAESFRDAMRIGAEVYHNLKSVIKEKYGKDATNVGDEGGFAPNILENSEALELLKEAIDKAGYTDKIVIGMDVAASEFYRDGKYDLDFKSPDDPSRYISADELGDLYQSFVRAYPVLSIEDPFDQDDWEAWSKFTANVGIQIVGDDLTVTNPKRIERAVEEKACNCLLLKVNQIGSVTEAIQACKLAQENGWGVMVSHRSGETEDTFIADLVVALCTGQIKTGAPCRSERLAKYNQLMRIEEELGDEARFAGHNFRNPSVL.

2 residues coordinate substrate: histidine 158 and glutamate 167. Catalysis depends on glutamate 210, which acts as the Proton donor. The Mg(2+) site is built by aspartate 245, glutamate 293, and aspartate 318. Substrate-binding residues include glutamate 293 and aspartate 318. The Proton acceptor role is filled by lysine 343. Residues 370-373 (SHRS) and lysine 394 contribute to the substrate site.

It belongs to the enolase family. Homodimer. Requires Mg(2+) as cofactor. Expressed in the brain and, to much less but significant extents, in the pituitary and adrenal glands.

The protein localises to the cytoplasm. It carries out the reaction (2R)-2-phosphoglycerate = phosphoenolpyruvate + H2O. The protein operates within carbohydrate degradation; glycolysis; pyruvate from D-glyceraldehyde 3-phosphate: step 4/5. The sequence is that of Gamma-enolase (ENO2) from Gallus gallus (Chicken).